Reading from the N-terminus, the 688-residue chain is Probable glucan endo-1,3-beta-glucosidase btgC (688 aa).

Disordered regions lie at residues 1–49 (MSGP…MNGQ), 61–91 (DGRQGWGRSPEPSPSLLTGSSATPGMDNLGP), and 169–194 (QLTPGQSVSHLSSTNPSQRNLYDIPY). At 1-307 (MSGPNRTYSF…PKPGGGNKKR (307 aa)) the chain is on the cytoplasmic side. The span at 175–188 (SVSHLSSTNPSQRN) shows a compositional bias: polar residues. Residues 308–328 (GWIVGAILAFIIIGAIVGGAV) form a helical; Signal-anchor for type II membrane protein membrane-spanning segment. Topologically, residues 329–688 (GGTIGHRGNE…IPDCGGKTAT (360 aa)) are extracellular. Residues 334–363 (HRGNEEPSSASSASSSSTQTATEDTSVNGD) form a disordered region. Positions 341–355 (SSASSASSSSTQTAT) are enriched in low complexity. N-linked (GlcNAc...) asparagine glycans are attached at residues Asn-408, Asn-431, and Asn-459. Glu-491 functions as the Proton donor in the catalytic mechanism. The active-site Nucleophile is the Glu-590. 2 N-linked (GlcNAc...) asparagine glycosylation sites follow: Asn-609 and Asn-635.

Belongs to the glycosyl hydrolase 17 family.

Its subcellular location is the cell membrane. It catalyses the reaction Hydrolysis of (1-&gt;3)-beta-D-glucosidic linkages in (1-&gt;3)-beta-D-glucans.. Its function is as follows. Glucanases play a role in cell expansion during growth, in cell-cell fusion during mating, and in spore release during sporulation. This enzyme may be involved in beta-glucan degradation. Active on laminarin and lichenan. This is Probable glucan endo-1,3-beta-glucosidase btgC (btgC) from Aspergillus fumigatus (strain CBS 144.89 / FGSC A1163 / CEA10) (Neosartorya fumigata).